We begin with the raw amino-acid sequence, 321 residues long: Beta-lactamase (321 aa).

The N-terminal stretch at 1 to 30 is a signal peptide; sequence MEKNRKKQIVVLSIALVCIFILVFSLFHKS. The Acyl-ester intermediate role is filled by Ser-83. 233 to 235 serves as a coordination point for substrate; that stretch reads KTG.

The protein belongs to the class-A beta-lactamase family.

It catalyses the reaction a beta-lactam + H2O = a substituted beta-amino acid. Its activity is regulated as follows. Inhibited by clavulanic acid. Functionally, can hydrolyze cephalosporins, penicillins and also cefoxitin; but at a slow rate. This is Beta-lactamase (cfxA) from Phocaeicola vulgatus (Bacteroides vulgatus).